Here is a 112-residue protein sequence, read N- to C-terminus: Large ribosomal subunit protein uL22 (112 aa).

This sequence belongs to the universal ribosomal protein uL22 family. As to quaternary structure, part of the 50S ribosomal subunit.

Its function is as follows. This protein binds specifically to 23S rRNA; its binding is stimulated by other ribosomal proteins, e.g. L4, L17, and L20. It is important during the early stages of 50S assembly. It makes multiple contacts with different domains of the 23S rRNA in the assembled 50S subunit and ribosome. In terms of biological role, the globular domain of the protein is located near the polypeptide exit tunnel on the outside of the subunit, while an extended beta-hairpin is found that lines the wall of the exit tunnel in the center of the 70S ribosome. This chain is Large ribosomal subunit protein uL22, found in Sulfurovum sp. (strain NBC37-1).